The chain runs to 140 residues: MEAIAKLIKVQLPNYLQKLPVPSSLSGFAELSPSDAIAVVFPFAVVSWLIGYSTYKFFQPKAVELPPSPKAKDTNCVNKCIDKTCKKVVHTVDIEDVGEKLVFCRCWRSKKFPYCDGSHNNHNEQEQDNVGPLIVKGKAN.

The Lumenal segment spans residues 1–35 (MEAIAKLIKVQLPNYLQKLPVPSSLSGFAELSPSD). Residues 36–59 (AIAVVFPFAVVSWLIGYSTYKFFQ) traverse the membrane as a helical segment. The Cytoplasmic segment spans residues 60–140 (PKAVELPPSP…GPLIVKGKAN (81 aa)). Cysteine 104, cysteine 106, cysteine 115, and histidine 119 together coordinate [2Fe-2S] cluster.

This sequence belongs to the CISD protein family. CISD2 subfamily. It depends on [2Fe-2S] cluster as a cofactor.

It is found in the endoplasmic reticulum membrane. The sequence is that of CDGSH iron-sulfur domain-containing protein 2 homolog from Trichoplax adhaerens (Trichoplax reptans).